Here is a 464-residue protein sequence, read N- to C-terminus: tRNA modification GTPase MnmE (464 aa).

Positions 25, 87, and 130 each coordinate (6S)-5-formyl-5,6,7,8-tetrahydrofolate. The TrmE-type G domain maps to 226–386; the sequence is GLSVVLAGQP…LRAELLRIAG (161 aa). N236 lines the K(+) pocket. GTP contacts are provided by residues 236–241, 255–261, and 280–283; these read NVGKSS, TPIAGTT, and DTAG. Residue S240 coordinates Mg(2+). Residues T255, I257, and T260 each coordinate K(+). T261 contributes to the Mg(2+) binding site. K464 serves as a coordination point for (6S)-5-formyl-5,6,7,8-tetrahydrofolate.

The protein belongs to the TRAFAC class TrmE-Era-EngA-EngB-Septin-like GTPase superfamily. TrmE GTPase family. Homodimer. Heterotetramer of two MnmE and two MnmG subunits. K(+) serves as cofactor.

It is found in the cytoplasm. In terms of biological role, exhibits a very high intrinsic GTPase hydrolysis rate. Involved in the addition of a carboxymethylaminomethyl (cmnm) group at the wobble position (U34) of certain tRNAs, forming tRNA-cmnm(5)s(2)U34. This chain is tRNA modification GTPase MnmE, found in Burkholderia ambifaria (strain ATCC BAA-244 / DSM 16087 / CCUG 44356 / LMG 19182 / AMMD) (Burkholderia cepacia (strain AMMD)).